Consider the following 869-residue polypeptide: Aminopeptidase N (869 aa).

Substrate is bound by residues glutamate 122 and 262 to 266; that span reads GAMEN. Histidine 298 contributes to the Zn(2+) binding site. The Proton acceptor role is filled by glutamate 299. Residues histidine 302 and glutamate 321 each coordinate Zn(2+).

It belongs to the peptidase M1 family. Zn(2+) is required as a cofactor.

It localises to the cell inner membrane. It carries out the reaction Release of an N-terminal amino acid, Xaa-|-Yaa- from a peptide, amide or arylamide. Xaa is preferably Ala, but may be most amino acids including Pro (slow action). When a terminal hydrophobic residue is followed by a prolyl residue, the two may be released as an intact Xaa-Pro dipeptide.. In terms of biological role, aminopeptidase N is involved in the degradation of intracellular peptides generated by protein breakdown during normal growth as well as in response to nutrient starvation. The protein is Aminopeptidase N (pepN) of Haemophilus influenzae (strain ATCC 51907 / DSM 11121 / KW20 / Rd).